The sequence spans 344 residues: Phosphate acyltransferase (344 aa).

Belongs to the PlsX family. In terms of assembly, homodimer. Probably interacts with PlsY.

Its subcellular location is the cytoplasm. It carries out the reaction a fatty acyl-[ACP] + phosphate = an acyl phosphate + holo-[ACP]. It participates in lipid metabolism; phospholipid metabolism. In terms of biological role, catalyzes the reversible formation of acyl-phosphate (acyl-PO(4)) from acyl-[acyl-carrier-protein] (acyl-ACP). This enzyme utilizes acyl-ACP as fatty acyl donor, but not acyl-CoA. In Blochmanniella floridana, this protein is Phosphate acyltransferase.